A 311-amino-acid chain; its full sequence is Aspartate carbamoyltransferase catalytic subunit (311 aa).

Carbamoyl phosphate contacts are provided by Arg55 and Thr56. Lys85 contacts L-aspartate. 3 residues coordinate carbamoyl phosphate: Arg106, His135, and Gln138. Residues Arg168 and Arg230 each coordinate L-aspartate. Carbamoyl phosphate-binding residues include Leu268 and Pro269.

Belongs to the aspartate/ornithine carbamoyltransferase superfamily. ATCase family. As to quaternary structure, heterododecamer (2C3:3R2) of six catalytic PyrB chains organized as two trimers (C3), and six regulatory PyrI chains organized as three dimers (R2).

It catalyses the reaction carbamoyl phosphate + L-aspartate = N-carbamoyl-L-aspartate + phosphate + H(+). It participates in pyrimidine metabolism; UMP biosynthesis via de novo pathway; (S)-dihydroorotate from bicarbonate: step 2/3. Functionally, catalyzes the condensation of carbamoyl phosphate and aspartate to form carbamoyl aspartate and inorganic phosphate, the committed step in the de novo pyrimidine nucleotide biosynthesis pathway. This Pectobacterium atrosepticum (strain SCRI 1043 / ATCC BAA-672) (Erwinia carotovora subsp. atroseptica) protein is Aspartate carbamoyltransferase catalytic subunit.